We begin with the raw amino-acid sequence, 83 residues long: uncharacterized protein (83 aa).

It belongs to the UPF0440 family.

This is an uncharacterized protein from Natronomonas pharaonis (strain ATCC 35678 / DSM 2160 / CIP 103997 / JCM 8858 / NBRC 14720 / NCIMB 2260 / Gabara) (Halobacterium pharaonis).